A 101-amino-acid polypeptide reads, in one-letter code: Small ribosomal subunit protein bS18c (101 aa).

Over residues 1 to 19 (MDKSKQPFHKTKRSFRRRL) the composition is skewed to basic residues. Residues 1–23 (MDKSKQPFHKTKRSFRRRLPPIG) are disordered.

The protein belongs to the bacterial ribosomal protein bS18 family. Part of the 30S ribosomal subunit.

Its subcellular location is the plastid. It is found in the chloroplast. The sequence is that of Small ribosomal subunit protein bS18c from Lemna minor (Common duckweed).